A 303-amino-acid chain; its full sequence is MASTQQCLASLARLSLSTPTRAALPTIPKFLVPSVAASQVRYATNNPNKGGAKKAPKKKKQYKFFKSWDLTGQQQFSLCDAMRYLRAVEVGQPPLSVKYEVHVKLRTKKNGPVVRDRVRLPTPVKTDTRIAVICPEGSALQEEAKNLGAVMAGEETLFEAIRSGNFPFNKLLCHTESEGALRKANVGKLLGPKGLMPSGKTKTITNNLEATFRDMIGMDEYRERNGVVRMAVGQLGFTPKQLAENIRVFMAKIKSDIGKLDDTTPKMVEEVVLSTTHGPGMSLNAEFAPTDDKIKPEDLESVM.

Belongs to the universal ribosomal protein uL1 family. In terms of assembly, component of the mitochondrial large ribosomal subunit (mt-LSU). Mature N.crassa 74S mitochondrial ribosomes consist of a small (37S) and a large (54S) subunit. The 37S small subunit contains a 16S ribosomal RNA (16S mt-rRNA) and 32 different proteins. The 54S large subunit contains a 23S rRNA (23S mt-rRNA) and 42 different proteins.

It localises to the mitochondrion. In terms of biological role, component of the mitochondrial ribosome (mitoribosome), a dedicated translation machinery responsible for the synthesis of mitochondrial genome-encoded proteins, including at least some of the essential transmembrane subunits of the mitochondrial respiratory chain. The mitoribosomes are attached to the mitochondrial inner membrane and translation products are cotranslationally integrated into the membrane. In Neurospora crassa (strain ATCC 24698 / 74-OR23-1A / CBS 708.71 / DSM 1257 / FGSC 987), this protein is Large ribosomal subunit protein uL1m (mrpl1).